Consider the following 269-residue polypeptide: MPANNPFKTALAARQAQIGLWLSMATPYLAEVSATAGFDWLLIDGEHAPNDLRSTLHALQAVAPYPVQPVVRAVAGEVPLIKQLLDIGVRSLLVPMVDTAEQARMVVSATRYPPQGIRGVGSAIARASQWSARTDYLDVADDEVCLLVQAETVTALQNLEAICAVDGIDGVFIGPADLAASMGHRGRPGHPEVQAAIEGAMRTIIASGKAAGTLTSDPALARRYLDLGCTFVATGVDVMLYANAARKLAASFREQPSDAPAADKPSAAY.

H47 acts as the Proton acceptor in catalysis. Residues E151 and D177 each contribute to the a divalent metal cation site.

This sequence belongs to the HpcH/HpaI aldolase family. It depends on a divalent metal cation as a cofactor.

It catalyses the reaction D-glyceraldehyde + 3-hydroxypyruvate = 2-dehydro-D-gluconate. The catalysed reaction is D-glyceraldehyde + 3-hydroxypyruvate = (3R,4S,5R)-3,4,5,6-tetrahydroxy-2-oxohexanoate. The enzyme catalyses D-glyceraldehyde + 3-hydroxypyruvate = 2-dehydro-D-galactonate. It carries out the reaction D-glyceraldehyde + pyruvate = 2-dehydro-3-deoxy-L-galactonate. It catalyses the reaction 2-dehydro-3-deoxy-D-gluconate = D-glyceraldehyde + pyruvate. Functionally, aldolase which can catalyze in vitro the aldolisation reaction between hydroxypyruvate (HPA) or pyruvate (PA) and D-glyceraldehyde (D-GA). The condensation of hydroxypyruvate and D-glyceraldehyde produces 2-dehydro-D-gluconate as the major product, (3R,4S,5R)-3,4,5,6-tetrahydroxy-2-oxohexanoate and 2-dehydro-D-galactonate. The condensation of pyruvate and D-glyceraldehyde produces 2-dehydro-3-deoxy-L-galactonate as the major product and 2-dehydro-3-deoxy-D-gluconate. This is Hydroxypyruvate/pyruvate aldolase from Cupriavidus necator (strain ATCC 17699 / DSM 428 / KCTC 22496 / NCIMB 10442 / H16 / Stanier 337) (Ralstonia eutropha).